Here is a 136-residue protein sequence, read N- to C-terminus: Protein NrdI (136 aa).

It belongs to the NrdI family.

Its function is as follows. Probably involved in ribonucleotide reductase function. This chain is Protein NrdI, found in Escherichia coli (strain 55989 / EAEC).